Here is a 464-residue protein sequence, read N- to C-terminus: Na(+)/H(+) antiporter NhaA (464 aa).

The next 12 helical transmembrane spans lie at 37–57 (GSGI…NTSC), 82–102 (IHYW…GLEI), 118–138 (VLPI…YFSF), 145–165 (VSGW…ILLL), 176–196 (AVLV…IAIF), 200–220 (NLAW…LLLN), 226–246 (ALWA…FSGV), 248–268 (ATVA…YSPT), 321–341 (ILNT…NAGV), 360–380 (VFFG…MICV), 396–416 (VLGI…VSEL), and 430–450 (ITIL…LRFI).

Belongs to the NhaA Na(+)/H(+) (TC 2.A.33) antiporter family.

Its subcellular location is the cell inner membrane. The catalysed reaction is Na(+)(in) + 2 H(+)(out) = Na(+)(out) + 2 H(+)(in). Its function is as follows. Na(+)/H(+) antiporter that extrudes sodium in exchange for external protons. The protein is Na(+)/H(+) antiporter NhaA of Dichelobacter nodosus (strain VCS1703A).